We begin with the raw amino-acid sequence, 556 residues long: 2-succinyl-5-enolpyruvyl-6-hydroxy-3-cyclohexene-1-carboxylate synthase (556 aa).

It belongs to the TPP enzyme family. MenD subfamily. In terms of assembly, homodimer. It depends on Mg(2+) as a cofactor. Mn(2+) is required as a cofactor. The cofactor is thiamine diphosphate.

The enzyme catalyses isochorismate + 2-oxoglutarate + H(+) = 5-enolpyruvoyl-6-hydroxy-2-succinyl-cyclohex-3-ene-1-carboxylate + CO2. The protein operates within quinol/quinone metabolism; 1,4-dihydroxy-2-naphthoate biosynthesis; 1,4-dihydroxy-2-naphthoate from chorismate: step 2/7. Its pathway is quinol/quinone metabolism; menaquinone biosynthesis. Its function is as follows. Catalyzes the thiamine diphosphate-dependent decarboxylation of 2-oxoglutarate and the subsequent addition of the resulting succinic semialdehyde-thiamine pyrophosphate anion to isochorismate to yield 2-succinyl-5-enolpyruvyl-6-hydroxy-3-cyclohexene-1-carboxylate (SEPHCHC). This Staphylococcus epidermidis (strain ATCC 12228 / FDA PCI 1200) protein is 2-succinyl-5-enolpyruvyl-6-hydroxy-3-cyclohexene-1-carboxylate synthase.